Here is a 375-residue protein sequence, read N- to C-terminus: Glucokinase 1 (375 aa).

Position 25-30 (25-30) interacts with ATP; it reads CDVGGS.

This sequence belongs to the bacterial glucokinase family. In terms of assembly, monomer. In terms of processing, the N-terminus is blocked.

It carries out the reaction D-glucose + ATP = D-glucose 6-phosphate + ADP + H(+). This chain is Glucokinase 1 (GK1), found in Trichomonas vaginalis.